The chain runs to 1821 residues: Latent-transforming growth factor beta-binding protein 2 (1821 aa).

The N-terminal stretch at 1 to 35 (MRPRTKARSPGRALRNPWRGFLPLTLALFVGAGHA) is a signal peptide. 2 disordered regions span residues 38–58 (DPVG…RPGG) and 81–165 (GLQP…RLTG). The heparin-binding stretch occupies residues 94-115 (SPRRPTEAEARRPSRAQQSRRV). 2 stretches are compositionally biased toward low complexity: residues 108–120 (RAQQ…PPAQ) and 129–145 (QQQP…LPRL). N-linked (GlcNAc...) asparagine glycosylation occurs at Asn-181. One can recognise an EGF-like 1 domain in the interval 187–219 (IKPVCEPPCQNRGSCSRPQLCVCRSGFRGARCE). Cystine bridges form between Cys-191–Cys-201, Cys-195–Cys-207, and Cys-209–Cys-218. Residues 229–339 (PQNSRLAPRR…AVPLEHPSSP (111 aa)) form a disordered region. The tract at residues 232–249 (SRLAPRRWAERSPNLRRS) is heparin-binding. Residues 262-274 (PPAPQSPPAPQSP) are compositionally biased toward pro residues. Polar residues-rich tracts occupy residues 280–292 (SGLS…QQHV) and 304–314 (ATASSQLSSNA). N-linked (GlcNAc...) asparagine glycosylation occurs at Asn-343. Residue 344 to 354 (LTEKIKKIKIV) coordinates heparin. Residues 375–377 (RGD) carry the Cell attachment site motif. Residues 396-428 (RIYFCQIPCLNGGRCIGRDECWCPANSTGKFCH) enclose the EGF-like 2 domain. Disulfide bonds link Cys-400/Cys-410, Cys-404/Cys-416, and Cys-418/Cys-427. A glycan (N-linked (GlcNAc...) asparagine) is linked at Asn-421. Ser-506 carries the phosphoserine modification. A disordered region spans residues 510 to 544 (RPPPWLPASPGHSLWDSNNIPARSGEPPRPLPPAA). A TB 1 domain is found at 552 to 604 (GRCYLNTVNGQCANPLLELTTQEDCCGSVGAFWGVTLCAPCPPRPASPVIENG). Intrachain disulfides connect Cys-554–Cys-576, Cys-563–Cys-589, and Cys-577–Cys-592. Residue Asn-616 is glycosylated (N-linked (GlcNAc...) asparagine). In terms of domain architecture, EGF-like 3; calcium-binding spans 622-662 (DINECLTLGLCKDAECVNTRGSYLCTCRPGLMLDPSRSRCV). 7 disulfides stabilise this stretch: Cys-626–Cys-637, Cys-632–Cys-646, Cys-648–Cys-661, Cys-674–Cys-696, Cys-683–Cys-709, Cys-697–Cys-712, and Cys-698–Cys-724. A TB 2 domain is found at 672–724 (GLCYRSLGPGTCTLPLAQRITKQICCCSRVGKAWGSECEKCPLPGTEAFREIC). Basic and acidic residues predominate over residues 744–757 (AEEEELARPPREQG). Residues 744–772 (AEEEELARPPREQGQRSSGALPGPAERQP) form a disordered region. N-linked (GlcNAc...) asparagine glycosylation occurs at Asn-811. The EGF-like 4 domain occupies 844–886 (GIDRCAAGATNVCGPGTCVNLPDGYRCVCSPGYQLHPSQAYCT). Cystine bridges form between Cys-848–Cys-861, Cys-856–Cys-870, Cys-872–Cys-885, Cys-891–Cys-902, Cys-896–Cys-911, Cys-913–Cys-928, Cys-934–Cys-945, Cys-940–Cys-954, Cys-956–Cys-968, Cys-974–Cys-985, Cys-980–Cys-994, Cys-997–Cys-1008, Cys-1014–Cys-1025, Cys-1020–Cys-1034, Cys-1036–Cys-1049, Cys-1055–Cys-1066, Cys-1061–Cys-1075, Cys-1078–Cys-1091, Cys-1097–Cys-1108, Cys-1103–Cys-1117, Cys-1120–Cys-1133, Cys-1139–Cys-1151, Cys-1146–Cys-1160, Cys-1162–Cys-1174, Cys-1180–Cys-1192, Cys-1186–Cys-1201, Cys-1203–Cys-1216, Cys-1222–Cys-1233, Cys-1228–Cys-1242, Cys-1244–Cys-1257, Cys-1263–Cys-1276, Cys-1271–Cys-1285, Cys-1289–Cys-1301, Cys-1307–Cys-1319, Cys-1313–Cys-1328, Cys-1330–Cys-1343, Cys-1349–Cys-1361, Cys-1356–Cys-1370, Cys-1372–Cys-1386, Cys-1413–Cys-1436, Cys-1423–Cys-1448, Cys-1437–Cys-1451, Cys-1438–Cys-1463, Cys-1489–Cys-1502, Cys-1497–Cys-1511, Cys-1513–Cys-1526, Cys-1532–Cys-1542, Cys-1537–Cys-1551, and Cys-1553–Cys-1566. In terms of domain architecture, EGF-like 5; calcium-binding spans 887–929 (DDNECLRDPCKGKGRCINRVGSYSCFCYPGYTLATSGATQECQ). The EGF-like 6; calcium-binding domain occupies 930 to 969 (DINECEQPGVCSGGQCTNTEGSYHCECDQGYIMVRKGHCQ). The 40-residue stretch at 970–1009 (DINECRHPGTCPDGRCVNSPGSYTCLACEEGYRGQSGSCV) folds into the EGF-like 7; calcium-binding domain. The 41-residue stretch at 1010–1050 (DVNECLTPGVCAHGKCTNLEGSFRCSCEQGYEVTSDEKGCQ) folds into the EGF-like 8; calcium-binding domain. The 42-residue stretch at 1051 to 1092 (DVDECASRASCPTGLCLNTEGSFACSACENGYWVNEDGTACE) folds into the EGF-like 9; calcium-binding domain. One can recognise an EGF-like 10; calcium-binding domain in the interval 1093-1134 (DLDECAFPGVCPSGVCTNTAGSFSCKDCDGGYRPSPLGDSCE). The region spanning 1135-1175 (DVDECEDPQSSCLGGECKNTVGSYQCLCPQGFQLANGTVCE) is the EGF-like 11; calcium-binding domain. N-linked (GlcNAc...) asparagine glycosylation is present at Asn-1170. Residues 1176 to 1217 (DVNECMGEEHCAPHGECLNSHGSFFCLCAPGFVSAEGGTSCQ) enclose the EGF-like 12; calcium-binding domain. An EGF-like 13; calcium-binding domain is found at 1218-1258 (DVDECATTDPCVGGHCVNTEGSFNCLCETGFQPSPESGECV). The region spanning 1259 to 1302 (DIDECEDYGDPVCGTWKCENSPGSYRCVLGCQPGFHMAPNGDCI) is the EGF-like 14; calcium-binding domain. In terms of domain architecture, EGF-like 15; calcium-binding spans 1303 to 1344 (DIDECANDTMCGSHGFCDNTDGSFRCLCDQGFEISPSGWDCV). N-linked (GlcNAc...) asparagine glycosylation occurs at Asn-1309. Residues 1345-1387 (DVNECELMLAVCGAALCENVEGSFLCLCASDLEEYDAQEGHCR) enclose the EGF-like 16; calcium-binding domain. In terms of domain architecture, TB 3 spans 1411-1463 (MDCYSGQKGHAPCSSVLGRNTTQAECCCTQGASWGDACDLCPSEDSAEFSEIC). Asn-1430 carries N-linked (GlcNAc...) asparagine glycosylation. In terms of domain architecture, EGF-like 17; calcium-binding spans 1485–1527 (DADECVIFGPGLCPNGRCLNTVPGYVCLCNPGFHYDASHKKCE). The region spanning 1528–1567 (DHDECQDLACENGECVNTEGSFHCFCSPPLTLDLSQQRCM) is the EGF-like 18; calcium-binding domain. N-linked (GlcNAc...) asparagine glycosylation is present at Asn-1568. A TB 4 domain is found at 1584-1636 (DICWKKVTNDVCSEPLRGHRTTYTECCCQDGEAWSQQCALCPPRSSEVYAQLC). 10 disulfides stabilise this stretch: Cys-1586–Cys-1609, Cys-1595–Cys-1621, Cys-1610–Cys-1624, Cys-1611–Cys-1636, Cys-1737–Cys-1748, Cys-1743–Cys-1757, Cys-1759–Cys-1772, Cys-1778–Cys-1793, Cys-1788–Cys-1802, and Cys-1804–Cys-1817. Residues 1639–1821 (ARIEAEREAG…AGPPHCTAKE (183 aa)) are C-terminal domain. Positions 1733–1773 (QAEECGILNGCENGRCVRVREGYTCDCFEGFQLDAAHMACV) constitute an EGF-like 19; calcium-binding domain. Residues 1774–1818 (DVNECDDLNGPAVLCVHGYCENTEGSYRCHCSPGYVAEAGPPHCT) form the EGF-like 20; calcium-binding domain.

Belongs to the LTBP family. Forms part of the large latent transforming growth factor beta precursor complex; removal is essential for activation of complex. Interacts with SDC4. Interacts (via C-terminal domain) with FBN1 (via N-terminal domain) in a Ca(+2)-dependent manner. N-Glycosylated. Post-translationally, contains hydroxylated asparagine residues. In terms of tissue distribution, expressed in the aorta (at protein level). Expressed in lung, weakly expressed in heart, placenta, liver and skeletal muscle.

It is found in the secreted. The protein resides in the extracellular space. It localises to the extracellular matrix. In terms of biological role, may play an integral structural role in elastic-fiber architectural organization and/or assembly. This chain is Latent-transforming growth factor beta-binding protein 2 (LTBP2), found in Homo sapiens (Human).